A 481-amino-acid chain; its full sequence is Alginate biosynthesis protein AlgA (481 aa).

It belongs to the mannose-6-phosphate isomerase type 2 family. In terms of assembly, monomer. It depends on Co(2+) as a cofactor.

The enzyme catalyses D-mannose 6-phosphate = D-fructose 6-phosphate. It carries out the reaction alpha-D-mannose 1-phosphate + GTP + H(+) = GDP-alpha-D-mannose + diphosphate. It participates in nucleotide-sugar biosynthesis; GDP-alpha-D-mannose biosynthesis; GDP-alpha-D-mannose from alpha-D-mannose 1-phosphate (GTP route): step 1/1. The protein operates within nucleotide-sugar biosynthesis; GDP-alpha-D-mannose biosynthesis; alpha-D-mannose 1-phosphate from D-fructose 6-phosphate: step 1/2. In terms of biological role, produces a precursor for alginate polymerization. The alginate layer provides a protective barrier against host immune defenses and antibiotics. This Pseudomonas aeruginosa (strain ATCC 15692 / DSM 22644 / CIP 104116 / JCM 14847 / LMG 12228 / 1C / PRS 101 / PAO1) protein is Alginate biosynthesis protein AlgA (algA).